The sequence spans 143 residues: Snake venom vascular endothelial growth factor toxin (143 aa).

An N-terminal signal peptide occupies residues 1-24 (MAAYLLAVAILFCIQGWPSATVQG). Glutamine 25 bears the Pyrrolidone carboxylic acid mark. Disulfide bonds link cysteine 38–cysteine 80, cysteine 69–cysteine 115, and cysteine 73–cysteine 117. Residues 115–143 (CECRPRSPGDVNNGRNPEEGEPRARFPFV) form a disordered region. Basic and acidic residues predominate over residues 130-143 (NPEEGEPRARFPFV).

Belongs to the PDGF/VEGF growth factor family. Snake venom VEGF subfamily. Homodimer; disulfide-linked. Interacts with VEGF receptor-2 (KDR). In terms of processing, the N-terminus is blocked for N-terminal sequencing, suggesting a Pyrrolidone carboxylic acid at Gln-25. As to expression, expressed by the venom gland.

The protein resides in the secreted. In terms of biological role, snake venom VEGFs that may contribute to venom dispersion and prey subjugation by inducing vascular permeability and hypotension. This protein induces an increase in capillary permeability when intradermally injected into mice. Also provokes a drastic hypotensive effect after intravenous injection. The hypotension is mediated by nitric oxide (NO), which is produced by VEGF-activated endothelium NO synthase. Also induces angiogenesis in vitro. Unlike other crotalid VEGFs, this protein interacts with VEGF receptor-2 (KDR) with a high affinity (Kd=413 pM), whereas no interaction is detected with VEGF receptor-1 (FLT1). This is Snake venom vascular endothelial growth factor toxin from Protobothrops jerdonii (Jerdon's pitviper).